Here is a 307-residue protein sequence, read N- to C-terminus: MSHISVLLFETVESLLADRTTGVYIDATFGRGGHTRLLLSKLDENARVYAFDKDPQALEVAAALAQEDPRFTIIHASFADIKEKMQEIGVQSVDGIMADLGVSSPQLDQAERGFSFMQDGPLDMRMDNSKGLTADEWLLEVEEEDLANIIYQYGEERYSRRIARAIKQAGKLDTTAQLAEIVKTAHPKWEKHKHPATRTFQAIRIAINKELDDIEVFLPQAVDLLKPKGRLSVISFHSLEDRLIKQFIQKESTLAEDSGWGMPQQQVDTRRLKKISRVRASEEEVKANPRSRSAWLRVAERLEQKGA.

S-adenosyl-L-methionine is bound by residues 32–34 (GGH), aspartate 52, phenylalanine 78, aspartate 99, and glutamine 106.

It belongs to the methyltransferase superfamily. RsmH family.

Its subcellular location is the cytoplasm. The enzyme catalyses cytidine(1402) in 16S rRNA + S-adenosyl-L-methionine = N(4)-methylcytidine(1402) in 16S rRNA + S-adenosyl-L-homocysteine + H(+). Specifically methylates the N4 position of cytidine in position 1402 (C1402) of 16S rRNA. The protein is Ribosomal RNA small subunit methyltransferase H of Acinetobacter baumannii (strain AB0057).